Consider the following 179-residue polypeptide: NADH-quinone oxidoreductase subunit B (179 aa).

[4Fe-4S] cluster contacts are provided by C53, C54, C118, and C148.

This sequence belongs to the complex I 20 kDa subunit family. As to quaternary structure, NDH-1 is composed of 14 different subunits. Subunits NuoB, C, D, E, F, and G constitute the peripheral sector of the complex. [4Fe-4S] cluster serves as cofactor.

Its subcellular location is the cell membrane. It catalyses the reaction a quinone + NADH + 5 H(+)(in) = a quinol + NAD(+) + 4 H(+)(out). Functionally, NDH-1 shuttles electrons from NADH, via FMN and iron-sulfur (Fe-S) centers, to quinones in the respiratory chain. The immediate electron acceptor for the enzyme in this species is believed to be a menaquinone. Couples the redox reaction to proton translocation (for every two electrons transferred, four hydrogen ions are translocated across the cytoplasmic membrane), and thus conserves the redox energy in a proton gradient. The protein is NADH-quinone oxidoreductase subunit B of Bacillus thuringiensis (strain Al Hakam).